The following is a 360-amino-acid chain: Phospho-N-acetylmuramoyl-pentapeptide-transferase (360 aa).

10 consecutive transmembrane segments (helical) span residues 26-46 (SIMA…KVIN), 73-93 (TMGG…WADL), 98-118 (VWFT…DDYW), 132-152 (WKYF…YAMG), 168-188 (VMPQ…VGTS), 199-219 (GLAI…AWAT), 236-256 (SGEL…FLWY), 263-283 (VFMG…IAVL), 288-308 (LLLL…ILQV), and 338-358 (VIVR…VTLK).

Belongs to the glycosyltransferase 4 family. MraY subfamily. It depends on Mg(2+) as a cofactor.

Its subcellular location is the cell inner membrane. It carries out the reaction UDP-N-acetyl-alpha-D-muramoyl-L-alanyl-gamma-D-glutamyl-meso-2,6-diaminopimeloyl-D-alanyl-D-alanine + di-trans,octa-cis-undecaprenyl phosphate = di-trans,octa-cis-undecaprenyl diphospho-N-acetyl-alpha-D-muramoyl-L-alanyl-D-glutamyl-meso-2,6-diaminopimeloyl-D-alanyl-D-alanine + UMP. It participates in cell wall biogenesis; peptidoglycan biosynthesis. Functionally, catalyzes the initial step of the lipid cycle reactions in the biosynthesis of the cell wall peptidoglycan: transfers peptidoglycan precursor phospho-MurNAc-pentapeptide from UDP-MurNAc-pentapeptide onto the lipid carrier undecaprenyl phosphate, yielding undecaprenyl-pyrophosphoryl-MurNAc-pentapeptide, known as lipid I. This Haemophilus ducreyi (strain 35000HP / ATCC 700724) protein is Phospho-N-acetylmuramoyl-pentapeptide-transferase.